The chain runs to 124 residues: Large ribosomal subunit protein bL12 (124 aa).

Belongs to the bacterial ribosomal protein bL12 family. In terms of assembly, homodimer. Part of the ribosomal stalk of the 50S ribosomal subunit. Forms a multimeric L10(L12)X complex, where L10 forms an elongated spine to which 2 to 4 L12 dimers bind in a sequential fashion. Binds GTP-bound translation factors.

In terms of biological role, forms part of the ribosomal stalk which helps the ribosome interact with GTP-bound translation factors. Is thus essential for accurate translation. The polypeptide is Large ribosomal subunit protein bL12 (Desulforamulus reducens (strain ATCC BAA-1160 / DSM 100696 / MI-1) (Desulfotomaculum reducens)).